Consider the following 354-residue polypeptide: MTEPLKPRIDFAESLSGPQEPVLKPAQIFNEKETANFCPASPELEAEEREGQVEGIVNAALKPKRSGWRKMVYGSLMLLGLSAVAQFVQWIYQSWQQQDWSALGVAAAGSMIVFAGIGSLVSEWHRLYRLRVRSEERDTARALLQHHGVGKGREFCEKLASQAGIEQHNPALQRWRAALHDTHNDREVVVLYSKWVQPVLDSQVRAEISRCAAESALMIAVSPLAIVDMAFIAWRNIRLINRIAALYGIELGYFSRIRLFRLVLLNIVFSGASEVVREVGMDWLSQDIAARLSVRAAQGIGVGLLTARLGIKAMELCRPLPWIEGDKPKLGDFRRQLITQLKNILPNKSKNIVN.

Helical transmembrane passes span 71 to 91, 101 to 121, and 214 to 234; these read MVYGSLMLLGLSAVAQFVQWI, SALGVAAAGSMIVFAGIGSLV, and ESALMIAVSPLAIVDMAFIAW.

The protein belongs to the UPF0283 family.

The protein resides in the cell inner membrane. This chain is UPF0283 membrane protein plu2581, found in Photorhabdus laumondii subsp. laumondii (strain DSM 15139 / CIP 105565 / TT01) (Photorhabdus luminescens subsp. laumondii).